The chain runs to 265 residues: Acyl-[acyl-carrier-protein]--UDP-N-acetylglucosamine O-acyltransferase (265 aa).

This sequence belongs to the transferase hexapeptide repeat family. LpxA subfamily. Homotrimer.

It localises to the cytoplasm. The enzyme catalyses a (3R)-hydroxyacyl-[ACP] + UDP-N-acetyl-alpha-D-glucosamine = a UDP-3-O-[(3R)-3-hydroxyacyl]-N-acetyl-alpha-D-glucosamine + holo-[ACP]. It functions in the pathway glycolipid biosynthesis; lipid IV(A) biosynthesis; lipid IV(A) from (3R)-3-hydroxytetradecanoyl-[acyl-carrier-protein] and UDP-N-acetyl-alpha-D-glucosamine: step 1/6. Its function is as follows. Involved in the biosynthesis of lipid A, a phosphorylated glycolipid that anchors the lipopolysaccharide to the outer membrane of the cell. The protein is Acyl-[acyl-carrier-protein]--UDP-N-acetylglucosamine O-acyltransferase of Polynucleobacter asymbioticus (strain DSM 18221 / CIP 109841 / QLW-P1DMWA-1) (Polynucleobacter necessarius subsp. asymbioticus).